Reading from the N-terminus, the 269-residue chain is Hydroxyacylglutathione hydrolase (269 aa).

7 residues coordinate Zn(2+): histidine 56, histidine 58, aspartate 60, histidine 61, histidine 115, aspartate 137, and histidine 177.

This sequence belongs to the metallo-beta-lactamase superfamily. Glyoxalase II family. Monomer. Requires Zn(2+) as cofactor.

The catalysed reaction is an S-(2-hydroxyacyl)glutathione + H2O = a 2-hydroxy carboxylate + glutathione + H(+). The protein operates within secondary metabolite metabolism; methylglyoxal degradation; (R)-lactate from methylglyoxal: step 2/2. Its function is as follows. Thiolesterase that catalyzes the hydrolysis of S-D-lactoyl-glutathione to form glutathione and D-lactic acid. This chain is Hydroxyacylglutathione hydrolase, found in Leptospira borgpetersenii serovar Hardjo-bovis (strain JB197).